Here is a 319-residue protein sequence, read N- to C-terminus: Glycine--tRNA ligase alpha subunit (319 aa).

It belongs to the class-II aminoacyl-tRNA synthetase family. Tetramer of two alpha and two beta subunits.

It localises to the cytoplasm. It catalyses the reaction tRNA(Gly) + glycine + ATP = glycyl-tRNA(Gly) + AMP + diphosphate. The sequence is that of Glycine--tRNA ligase alpha subunit from Oenococcus oeni (strain ATCC BAA-331 / PSU-1).